Reading from the N-terminus, the 438-residue chain is (3,5-dihydroxyphenyl)acetyl-CoA 1,2-dioxygenase (438 aa).

Substrate is bound by residues Asp-183, Glu-189, 222–225 (HPRY), 233–238 (AGINLK), Gly-296, 325–327 (IPG), and Gln-416.

The protein belongs to the enoyl-CoA hydratase/isomerase family. In terms of assembly, homohexamer; dimer of trimers.

It carries out the reaction (3,5-dihydroxyphenyl)acetyl-CoA + O2 = 2-(3,5-dihydroxyphenyl)-2-oxoacetate + CoA + H(+). Its activity is regulated as follows. Inhibited by DPA-S-(N-acetylcysteamine). Its function is as follows. Involved in the biosynthesis of the nonproteinogenic amino acid monomer (S)-3,5-dihydroxyphenylglycine (Dpg) responsible of the production of vancomycin and teicoplanin antibiotics. Catalyzes the unusual conversion 3,5-dihydroxyphenylacetyl-CoA (DPA-CoA) to 3,5-dihydroxyphenylglyoxylate. DpgC performed a net four-electron oxidation of the benzylic carbon of DPA-CoA and the hydrolysis of the thioester bond to generate free CoA. DpgC has the ability to process a diverse range of substituted phenylacetyl-CoA substrates. This Streptomyces toyocaensis protein is (3,5-dihydroxyphenyl)acetyl-CoA 1,2-dioxygenase.